Here is a 195-residue protein sequence, read N- to C-terminus: Peptidyl-tRNA hydrolase (195 aa).

Tyrosine 17 contacts tRNA. Histidine 22 serves as the catalytic Proton acceptor. Phenylalanine 68, asparagine 70, and asparagine 116 together coordinate tRNA.

It belongs to the PTH family. In terms of assembly, monomer.

It is found in the cytoplasm. The catalysed reaction is an N-acyl-L-alpha-aminoacyl-tRNA + H2O = an N-acyl-L-amino acid + a tRNA + H(+). In terms of biological role, hydrolyzes ribosome-free peptidyl-tRNAs (with 1 or more amino acids incorporated), which drop off the ribosome during protein synthesis, or as a result of ribosome stalling. Its function is as follows. Catalyzes the release of premature peptidyl moieties from peptidyl-tRNA molecules trapped in stalled 50S ribosomal subunits, and thus maintains levels of free tRNAs and 50S ribosomes. In Erwinia tasmaniensis (strain DSM 17950 / CFBP 7177 / CIP 109463 / NCPPB 4357 / Et1/99), this protein is Peptidyl-tRNA hydrolase.